A 429-amino-acid chain; its full sequence is MLSCTTSTMPGMICKNSDLEFDSLKPCFYPEDDDIYFGGRNSTPPGEDIWKKFELLPTPRLSPGRALAEDSLEPANWATEMLLPEADLWSNPAEEEDIFGLKGLSGSSSNPVVLQDCMWSGFSSREKPETVVSEKLPGGCGSLAVGAGTLVPGAAAATSAGHARSGTAGVGRRKAAWLTELSHLDSECVDSAVIFPANKRESMPVATIPASAGAAISLGDHQGLSSSLEDFLSNSGYVEEGGEEIYVVMLGETQFSKTVTKLPTAAHSENAALTPECAQSGELILKRSDLIQEQHNYAAPPLPYAEDARPLKKPRSQDPLGPLKCVLRPKAPRLRSRSNSDLEDIERRRNHNRMERQRRDIMRSSFLNLRDLVPELVHNEKAAKVVILKKATEYIHTLQTDESKLLVEREKLYERKQQLLEKIKQSAVC.

The residue at position 36 (Tyr36) is a Phosphotyrosine; by Tyr-kinases. Positions 301 to 325 (PLPYAEDARPLKKPRSQDPLGPLKC) are disordered. Residues 346-398 (ERRRNHNRMERQRRDIMRSSFLNLRDLVPELVHNEKAAKVVILKKATEYIHTL) enclose the bHLH domain. Residues 398–419 (LQTDESKLLVEREKLYERKQQL) form a leucine-zipper region.

As to quaternary structure, efficient DNA binding requires dimerization with another bHLH protein.

The protein resides in the nucleus. Its function is as follows. Has apoptosis-inducing activity. This is Protein S-Myc (Mycs) from Rattus norvegicus (Rat).